Consider the following 207-residue polypeptide: N-(5'-phosphoribosyl)anthranilate isomerase (207 aa).

Belongs to the TrpF family.

The enzyme catalyses N-(5-phospho-beta-D-ribosyl)anthranilate = 1-(2-carboxyphenylamino)-1-deoxy-D-ribulose 5-phosphate. It participates in amino-acid biosynthesis; L-tryptophan biosynthesis; L-tryptophan from chorismate: step 3/5. The protein is N-(5'-phosphoribosyl)anthranilate isomerase of Halorhodospira halophila (strain DSM 244 / SL1) (Ectothiorhodospira halophila (strain DSM 244 / SL1)).